The chain runs to 140 residues: HTH-type transcriptional regulator LysM (140 aa).

The HTH asnC-type domain maps to 4 to 67 (VDESDLKILE…ELENEIRAIV (64 aa)). The segment at residues 23 to 42 (YTSIAKELKISEAAVRKRIE) is a DNA-binding region (H-T-H motif).

Homotetramer.

It is found in the cytoplasm. It functions in the pathway amino-acid biosynthesis; L-lysine biosynthesis via AAA pathway [regulation]. In terms of biological role, in the absence or at low concentrations of lysine, activates the biosynthesis of this amino acid via the alpha-aminoadipate (AAA) pathway. This Sulfurisphaera tokodaii (strain DSM 16993 / JCM 10545 / NBRC 100140 / 7) (Sulfolobus tokodaii) protein is HTH-type transcriptional regulator LysM (lysM).